The following is a 566-amino-acid chain: MSKSRRVFLSIQGDDDFWGNGDQLEGKTLSSIKQQESKKMDDSVEGMEEEKYFFRQSKLGRQNLERLHEKEEQECEEERLDWSEKVDSEEEEEDIQEQDEIITEGKETEMFDSGPETDQKMPVDPNEGFYNNYRSYFSGRPEMLFLIRSIDESATDYYEKPFIDLYETTRKRLEMYPNTELNQILRCACNPNAGGGADYRVRNKHAVVVSNFREPDRRLGRYSKYYYHHNVGPEVYSRKVFVGGLPACVKEMDILHFFSRYGRLQVDWPSKHYGCKSDSDPSVYNEPSFTPPTSHLGLSSPPFGQINPFMTDCPPAPSDLQMSRHGSVDGGGGGFPTHGMSMRNIGFGGGSGPRSTGEGEKKQQHLGYVFLLFEKERSVRDLVTECFEEEEGLFIILESAIEPIRVQIRPWLLADAEFLMDFNVPINTKMVAFIGGVPRPLKAVELAHFFEQTYGNVVCVGIDIDNKFKYPRGSGRVAFSNYHAYVQAITDRYIVLDHEDIHKRVEIKPYFFHNQSCEECSSRYHRQYAPFFCPSLECFQYYCEPCWHKMHARPSRFHHMPVVKGI.

Disordered stretches follow at residues Phe17–Gly46 and Leu64–Gln98. Acidic residues predominate over residues Asp87–Gln98. One can recognise an RRM domain in the interval Met430–Phe512.

Cytoplasmic polyadenylation element binding protein that binds to and regulates the translation of specific mRNAs. This chain is Cytoplasmic polyadenylation element-binding protein 2 (cpb-2), found in Caenorhabditis briggsae.